The sequence spans 180 residues: Cytidylate kinase (180 aa).

7 to 15 provides a ligand contact to ATP; that stretch reads GPPGSGTTT.

Belongs to the cytidylate kinase family. Type 2 subfamily.

The protein localises to the cytoplasm. The enzyme catalyses CMP + ATP = CDP + ADP. It carries out the reaction dCMP + ATP = dCDP + ADP. This chain is Cytidylate kinase (cmk), found in Archaeoglobus fulgidus (strain ATCC 49558 / DSM 4304 / JCM 9628 / NBRC 100126 / VC-16).